A 510-amino-acid chain; its full sequence is Catalase (510 aa).

The N-terminal stretch at 1-26 (MPLLNWSRHMVCLTAAGLITVPTVYA) is a signal peptide. Residues H78 and N150 contribute to the active site. Heme is bound at residue Y358. Over residues 386–400 (NQDGALNTGHTTSGV) the composition is skewed to polar residues. Residues 386 to 412 (NQDGALNTGHTTSGVNYEPSRLEPRPA) are disordered.

It belongs to the catalase family. The cofactor is heme.

It is found in the periplasm. It carries out the reaction 2 H2O2 = O2 + 2 H2O. In terms of biological role, decomposes hydrogen peroxide into water and oxygen; serves to protect cells from the toxic effects of hydrogen peroxide. The sequence is that of Catalase (katB) from Pseudomonas syringae pv. syringae.